Consider the following 89-residue polypeptide: Small ribosomal subunit protein uS15 (89 aa).

Residues M1 to D21 are compositionally biased toward basic and acidic residues. The tract at residues M1–E26 is disordered.

The protein belongs to the universal ribosomal protein uS15 family. In terms of assembly, part of the 30S ribosomal subunit. Forms a bridge to the 50S subunit in the 70S ribosome, contacting the 23S rRNA.

One of the primary rRNA binding proteins, it binds directly to 16S rRNA where it helps nucleate assembly of the platform of the 30S subunit by binding and bridging several RNA helices of the 16S rRNA. Its function is as follows. Forms an intersubunit bridge (bridge B4) with the 23S rRNA of the 50S subunit in the ribosome. In Sphingopyxis alaskensis (strain DSM 13593 / LMG 18877 / RB2256) (Sphingomonas alaskensis), this protein is Small ribosomal subunit protein uS15.